Reading from the N-terminus, the 349-residue chain is 4-hydroxy-3-methylbut-2-en-1-yl diphosphate synthase (flavodoxin) (349 aa).

Cysteine 264, cysteine 267, cysteine 299, and glutamate 306 together coordinate [4Fe-4S] cluster.

This sequence belongs to the IspG family. [4Fe-4S] cluster serves as cofactor.

The enzyme catalyses (2E)-4-hydroxy-3-methylbut-2-enyl diphosphate + oxidized [flavodoxin] + H2O + 2 H(+) = 2-C-methyl-D-erythritol 2,4-cyclic diphosphate + reduced [flavodoxin]. The protein operates within isoprenoid biosynthesis; isopentenyl diphosphate biosynthesis via DXP pathway; isopentenyl diphosphate from 1-deoxy-D-xylulose 5-phosphate: step 5/6. Functionally, converts 2C-methyl-D-erythritol 2,4-cyclodiphosphate (ME-2,4cPP) into 1-hydroxy-2-methyl-2-(E)-butenyl 4-diphosphate. The chain is 4-hydroxy-3-methylbut-2-en-1-yl diphosphate synthase (flavodoxin) from Clostridium tetani (strain Massachusetts / E88).